We begin with the raw amino-acid sequence, 809 residues long: ATP-dependent zinc metalloprotease FTSH 3, mitochondrial (809 aa).

The transit peptide at Met-1–Phe-83 directs the protein to the mitochondrion. Over residues Tyr-93–Asn-121 the composition is skewed to basic and acidic residues. The interval Tyr-93–Glu-122 is disordered. Residues Phe-132–Gly-152 traverse the membrane as a helical segment. Gly-362–Thr-369 serves as a coordination point for ATP. His-586 lines the Zn(2+) pocket. Glu-587 is a catalytic residue. 2 residues coordinate Zn(2+): His-590 and Asp-662. The disordered stretch occupies residues Gly-776–Thr-809.

In the N-terminal section; belongs to the AAA ATPase family. This sequence in the C-terminal section; belongs to the peptidase M41 family. Zn(2+) is required as a cofactor.

It localises to the mitochondrion inner membrane. Its function is as follows. Probable ATP-dependent zinc metallopeptidase. Involved in the assembly and/or stability of the complexes I and V of the mitochondrial oxidative phosphorylation system. This Arabidopsis thaliana (Mouse-ear cress) protein is ATP-dependent zinc metalloprotease FTSH 3, mitochondrial (FTSH3).